The chain runs to 621 residues: DnaJ homolog subfamily C member 2 (621 aa).

Residue M1 is modified to N-acetylmethionine. 4 positions are modified to phosphoserine: S47, S49, S60, and S63. Positions 88–161 constitute a J domain; it reads DHYAVLGLGH…VKRRAFNSVD (74 aa). Residues 160–250 are ZRF1-UBD; the sequence is VDPTFDNSVP…RDERRWIEKQ (91 aa). S183 bears the Phosphoserine mark. Disordered stretches follow at residues 294–315 and 426–453; these read EKKAKADAKRKEQEAKEKQRQA and KEEAEARMRQASKNAEKSAGGGGNGSKH. SANT domains lie at 449–511 and 549–604; these read NGSK…KLDP and TDFT…EMVK.

Component of ribosome-associated complex (RAC), a heterodimer composed of Hsp70/DnaK-type chaperone HSPA14 and Hsp40/DnaJ-type chaperone DNAJC2. Interacts (via ZRF1-UBD region) with ID1. Post-translationally, phosphorylated in M (mitotic) phase.

Its subcellular location is the nucleus. The protein resides in the cytoplasm. It localises to the cytosol. Acts both as a chaperone in the cytosol and as a chromatin regulator in the nucleus. When cytosolic, acts as a molecular chaperone: component of the ribosome-associated complex (RAC), a complex involved in folding or maintaining nascent polypeptides in a folding-competent state. In the RAC complex, stimulates the ATPase activity of the ribosome-associated pool of Hsp70-type chaperones HSPA14 that bind to the nascent polypeptide chain. When nuclear, mediates the switching from polycomb-repressed genes to an active state: specifically recruited at histone H2A ubiquitinated at 'Lys-119' (H2AK119ub), and promotes the displacement of the polycomb PRC1 complex from chromatin, thereby facilitating transcription activation. This Bos taurus (Bovine) protein is DnaJ homolog subfamily C member 2 (DNAJC2).